Consider the following 422-residue polypeptide: 26S proteasome non-ATPase regulatory subunit 11 (422 aa).

The residue at position 2 (Ala-2) is an N-acetylalanine. 2 positions are modified to phosphoserine: Ser-14 and Ser-23. In terms of domain architecture, PCI spans 224 to 392 (DWKTAYSYFY…GVLIIFDEPP (169 aa)). Lys-274 is covalently cross-linked (Glycyl lysine isopeptide (Lys-Gly) (interchain with G-Cter in SUMO2)).

It belongs to the proteasome subunit S9 family. Component of the 19S proteasome regulatory particle complex. The 26S proteasome consists of a 20S core particle (CP) and two 19S regulatory subunits (RP). The regulatory particle is made of a lid composed of 9 subunits including PSMD11, a base containing 6 ATPases and few additional components.

Its function is as follows. Component of the 26S proteasome, a multiprotein complex involved in the ATP-dependent degradation of ubiquitinated proteins. This complex plays a key role in the maintenance of protein homeostasis by removing misfolded or damaged proteins, which could impair cellular functions, and by removing proteins whose functions are no longer required. Therefore, the proteasome participates in numerous cellular processes, including cell cycle progression, apoptosis, or DNA damage repair. In the complex, PSMD11 is required for proteasome assembly. Plays a key role in increased proteasome activity in embryonic stem cells (ESCs): its high expression in ESCs promotes enhanced assembly of the 26S proteasome, followed by higher proteasome activity. This chain is 26S proteasome non-ATPase regulatory subunit 11 (Psmd11), found in Mus musculus (Mouse).